Consider the following 382-residue polypeptide: Na(+)/H(+) antiporter NhaA 2 (382 aa).

Transmembrane regions (helical) follow at residues 7–27 (MVLS…LALL), 58–78 (LDLW…GLEL), 94–114 (SLPI…FIAI), 124–144 (GWAI…MLLG), 153–173 (LFLL…IALF), 178–198 (LSAL…LLNY), 199–219 (YHIT…IAML), 255–275 (NPWV…GIDI), 291–311 (IILG…FIAI), 327–347 (FYGI…IDGL), and 361–381 (LAIL…LKIV).

This sequence belongs to the NhaA Na(+)/H(+) (TC 2.A.33) antiporter family.

The protein resides in the cell inner membrane. It carries out the reaction Na(+)(in) + 2 H(+)(out) = Na(+)(out) + 2 H(+)(in). Functionally, na(+)/H(+) antiporter that extrudes sodium in exchange for external protons. The sequence is that of Na(+)/H(+) antiporter NhaA 2 from Campylobacter jejuni (strain RM1221).